The sequence spans 186 residues: FMN reductase (NADPH) (186 aa).

Belongs to the SsuE family.

It carries out the reaction FMNH2 + NADP(+) = FMN + NADPH + 2 H(+). The sequence is that of FMN reductase (NADPH) (msuE) from Pseudomonas aeruginosa (strain ATCC 15692 / DSM 22644 / CIP 104116 / JCM 14847 / LMG 12228 / 1C / PRS 101 / PAO1).